The following is a 35-amino-acid chain: Leukocyte cysteine proteinase inhibitor 2 (35 aa).

The interval 1 to 35 (LAGGLTEPRPADTEIQEIANKVKPQLEEKTNKKYD) is disordered. Over residues 24-35 (PQLEEKTNKKYD) the composition is skewed to basic and acidic residues.

The protein belongs to the cystatin family.

It localises to the cytoplasm. Potent inhibitor of cathepsins L and S, and papain. In Sus scrofa (Pig), this protein is Leukocyte cysteine proteinase inhibitor 2.